Consider the following 213-residue polypeptide: ATP-dependent dethiobiotin synthetase BioD (213 aa).

12-17 (NVGKTF) contributes to the ATP binding site. Residue threonine 16 participates in Mg(2+) binding. The active site involves lysine 36. Substrate is bound at residue serine 40. ATP-binding positions include aspartate 53, 110-113 (EGTG), and 170-171 (NQ). Residues aspartate 53 and glutamate 110 each contribute to the Mg(2+) site.

It belongs to the dethiobiotin synthetase family. Homodimer. Requires Mg(2+) as cofactor.

Its subcellular location is the cytoplasm. It carries out the reaction (7R,8S)-7,8-diammoniononanoate + CO2 + ATP = (4R,5S)-dethiobiotin + ADP + phosphate + 3 H(+). It functions in the pathway cofactor biosynthesis; biotin biosynthesis; biotin from 7,8-diaminononanoate: step 1/2. In terms of biological role, catalyzes a mechanistically unusual reaction, the ATP-dependent insertion of CO2 between the N7 and N8 nitrogen atoms of 7,8-diaminopelargonic acid (DAPA, also called 7,8-diammoniononanoate) to form a ureido ring. This Ruthia magnifica subsp. Calyptogena magnifica protein is ATP-dependent dethiobiotin synthetase BioD.